We begin with the raw amino-acid sequence, 297 residues long: Probable deoxyhypusine synthase (297 aa).

Lys265 (nucleophile) is an active-site residue.

The protein belongs to the deoxyhypusine synthase family. The cofactor is NAD(+).

It carries out the reaction [eIF5A protein]-L-lysine + spermidine = [eIF5A protein]-deoxyhypusine + propane-1,3-diamine. The protein operates within protein modification; eIF5A hypusination. Catalyzes the NAD-dependent oxidative cleavage of spermidine and the subsequent transfer of the butylamine moiety of spermidine to the epsilon-amino group of a specific lysine residue of the eIF-5A precursor protein to form the intermediate deoxyhypusine residue. The chain is Probable deoxyhypusine synthase from Methanopyrus kandleri (strain AV19 / DSM 6324 / JCM 9639 / NBRC 100938).